Reading from the N-terminus, the 173-residue chain is UPF0102 protein Psyc_1908 (173 aa).

The protein belongs to the UPF0102 family.

The polypeptide is UPF0102 protein Psyc_1908 (Psychrobacter arcticus (strain DSM 17307 / VKM B-2377 / 273-4)).